Consider the following 508-residue polypeptide: Putative POTE ankyrin domain family member M (508 aa).

ANK repeat units follow at residues 172-201, 205-234, 238-267, 271-300, and 304-333; these read QKRT…QLNI, KKRT…DPNI, YGNT…DIES, HGLT…NLNA, and YGRT…DVSS. The interval 369-487 is disordered; that stretch reads SSENSNPEQD…KQLSEEQNTG (119 aa). Basic and acidic residues-rich tracts occupy residues 377 to 392 and 406 to 421; these read QDLK…RLKG and EINK…EMKK. Residues 476–487 are compositionally biased toward polar residues; it reads TQKQLSEEQNTG.

It belongs to the POTE family.

The chain is Putative POTE ankyrin domain family member M (POTEM) from Homo sapiens (Human).